Reading from the N-terminus, the 205-residue chain is Small ribosomal subunit protein bS16 (205 aa).

The segment at 110 to 205 is disordered; it reads GEEVKIAVGT…ADDNEEPEDE (96 aa). Over residues 123–132 the composition is skewed to basic and acidic residues; that stretch reads DPLERERERA. The span at 153–205 shows a compositional bias: acidic residues; the sequence is EETEAEEAEDVETADAEDADAASETDEPEAAADEADETDASADADDNEEPEDE.

This sequence belongs to the bacterial ribosomal protein bS16 family.

This chain is Small ribosomal subunit protein bS16, found in Salinibacter ruber (strain DSM 13855 / M31).